The following is a 231-amino-acid chain: tRNA (guanine-N(1)-)-methyltransferase (231 aa).

Gly112 contacts S-adenosyl-L-methionine.

It belongs to the RNA methyltransferase TrmD family. As to quaternary structure, homodimer.

It localises to the cytoplasm. The enzyme catalyses guanosine(37) in tRNA + S-adenosyl-L-methionine = N(1)-methylguanosine(37) in tRNA + S-adenosyl-L-homocysteine + H(+). In terms of biological role, specifically methylates guanosine-37 in various tRNAs. This Chlorobium chlorochromatii (strain CaD3) protein is tRNA (guanine-N(1)-)-methyltransferase.